A 595-amino-acid polypeptide reads, in one-letter code: Beta-hexosaminidase 1 (595 aa).

The N-terminal stretch at Met-1–Ala-20 is a signal peptide. Residue Asn-313 is glycosylated (N-linked (GlcNAc...) asparagine).

Belongs to the glycosyl hydrolase 20 family.

The enzyme catalyses Hydrolysis of terminal non-reducing N-acetyl-D-hexosamine residues in N-acetyl-beta-D-hexosaminides.. Beta-hexosaminidase that shows a broad substrate specificity. This chain is Beta-hexosaminidase 1, found in Coccidioides posadasii (strain RMSCC 757 / Silveira) (Valley fever fungus).